Here is a 112-residue protein sequence, read N- to C-terminus: Putative pterin-4-alpha-carbinolamine dehydratase (112 aa).

The protein belongs to the pterin-4-alpha-carbinolamine dehydratase family.

It carries out the reaction (4aS,6R)-4a-hydroxy-L-erythro-5,6,7,8-tetrahydrobiopterin = (6R)-L-erythro-6,7-dihydrobiopterin + H2O. The chain is Putative pterin-4-alpha-carbinolamine dehydratase from Shewanella baltica (strain OS155 / ATCC BAA-1091).